Here is a 942-residue protein sequence, read N- to C-terminus: Alanine--tRNA ligase (942 aa).

Residues His-586, His-590, Cys-695, and His-699 each contribute to the Zn(2+) site.

Belongs to the class-II aminoacyl-tRNA synthetase family. Zn(2+) serves as cofactor.

The protein resides in the cytoplasm. It catalyses the reaction tRNA(Ala) + L-alanine + ATP = L-alanyl-tRNA(Ala) + AMP + diphosphate. In terms of biological role, catalyzes the attachment of alanine to tRNA(Ala) in a two-step reaction: alanine is first activated by ATP to form Ala-AMP and then transferred to the acceptor end of tRNA(Ala). Also edits incorrectly charged Ser-tRNA(Ala) and Gly-tRNA(Ala) via its editing domain. The protein is Alanine--tRNA ligase of Akkermansia muciniphila (strain ATCC BAA-835 / DSM 22959 / JCM 33894 / BCRC 81048 / CCUG 64013 / CIP 107961 / Muc).